A 301-amino-acid polypeptide reads, in one-letter code: Small ribosomal subunit biogenesis GTPase RsgA (301 aa).

Residues 65–224 form the CP-type G domain; the sequence is YNQLIRPKVA…LVDTPGFGNL (160 aa). GTP-binding positions include 115–118 and 167–175; these read SKYD and GNSGVGKST. Cys-247, Cys-252, His-254, and Cys-260 together coordinate Zn(2+).

Belongs to the TRAFAC class YlqF/YawG GTPase family. RsgA subfamily. In terms of assembly, monomer. Associates with 30S ribosomal subunit, binds 16S rRNA. The cofactor is Zn(2+).

It localises to the cytoplasm. One of several proteins that assist in the late maturation steps of the functional core of the 30S ribosomal subunit. Helps release RbfA from mature subunits. May play a role in the assembly of ribosomal proteins into the subunit. Circularly permuted GTPase that catalyzes slow GTP hydrolysis, GTPase activity is stimulated by the 30S ribosomal subunit. The protein is Small ribosomal subunit biogenesis GTPase RsgA of Ureaplasma urealyticum serovar 10 (strain ATCC 33699 / Western).